The primary structure comprises 409 residues: F-box/kelch-repeat protein At2g44130 (409 aa).

In terms of domain architecture, F-box spans 17-63 (HELIPGLPSELALECLVRVPFQFQSAMRSVCRSWRSLLSDSSFIQER). Kelch repeat units follow at residues 98–148 (KKSE…VLQD), 151–199 (KILL…SVSP), 201–248 (KVYV…AVGM), and 251–300 (RFCV…RTAG).

This Arabidopsis thaliana (Mouse-ear cress) protein is F-box/kelch-repeat protein At2g44130.